The primary structure comprises 897 residues: Protein SAP1 (897 aa).

Disordered stretches follow at residues 112 to 144 (EEPAPRNDMPSSKTYTNHSSSFTRSTEPPPVFQ), 195 to 219 (PSKPLSNNASRQHKNPIEHNDPPLK), 302 to 398 (QMSD…TKST), 413 to 438 (SKSNTKPIIKSNASSPTSSLTVPNSV), and 456 to 561 (KKVA…REEP). The span at 120–137 (MPSSKTYTNHSSSFTRST) shows a compositional bias: polar residues. The segment covering 209 to 219 (NPIEHNDPPLK) has biased composition (basic and acidic residues). Residues 307 to 321 (SVTSSTSSNKSVSSS) show a composition bias toward low complexity. Residues 364-380 (LETSTTMDSSKIRNPQI) show a composition bias toward polar residues. Positions 468–478 (KKSHPILKSKT) are enriched in basic residues. Low complexity predominate over residues 480–496 (KVPNSSSKKTSSHPSRP). Residues 497-523 (VSNSKPYSHGASQNKKPSKNQTTSMSK) show a composition bias toward polar residues. At serine 536 the chain carries Phosphoserine. Residue 645–652 (GPPGTGKT) participates in ATP binding.

This sequence belongs to the AAA ATPase family. In terms of assembly, interacts with SPT2/SIN1.

The polypeptide is Protein SAP1 (SAP1) (Saccharomyces cerevisiae (strain ATCC 204508 / S288c) (Baker's yeast)).